We begin with the raw amino-acid sequence, 36 residues long: Photosystem I reaction center subunit VIII (36 aa).

Residues Ser-8 to Val-28 traverse the membrane as a helical segment.

Belongs to the PsaI family.

It localises to the plastid. The protein localises to the chloroplast thylakoid membrane. Its function is as follows. May help in the organization of the PsaL subunit. The chain is Photosystem I reaction center subunit VIII from Chara vulgaris (Common stonewort).